A 158-amino-acid polypeptide reads, in one-letter code: Peptide deformylase (158 aa).

Fe cation-binding residues include Cys88 and His130. Glu131 is an active-site residue. Position 134 (His134) interacts with Fe cation.

It belongs to the polypeptide deformylase family. Fe(2+) serves as cofactor.

It catalyses the reaction N-terminal N-formyl-L-methionyl-[peptide] + H2O = N-terminal L-methionyl-[peptide] + formate. Functionally, removes the formyl group from the N-terminal Met of newly synthesized proteins. Requires at least a dipeptide for an efficient rate of reaction. N-terminal L-methionine is a prerequisite for activity but the enzyme has broad specificity at other positions. In Agathobacter rectalis (strain ATCC 33656 / DSM 3377 / JCM 17463 / KCTC 5835 / VPI 0990) (Eubacterium rectale), this protein is Peptide deformylase.